Reading from the N-terminus, the 1763-residue chain is Genome polyprotein (1763 aa).

Positions 458 to 614 constitute an SF3 helicase domain; that stretch reads DGVITSCNKR…ESHKRARPGT (157 aa). 484 to 491 provides a ligand contact to ATP; that stretch reads GPPGCGKT. Residues 981 to 986 form an acidic region; it reads DDEYDE. Tyr-984 is subject to O-(5'-phospho-RNA)-tyrosine. Thr-1040 bears the Phosphothreonine mark. Ser-1067 carries the post-translational modification Phosphoserine. The Peptidase C24 domain occupies 1073–1229; it reads GPGTKFHKNA…KLVVPYVHID (157 aa). Residues His-1110, Glu-1131, and Cys-1193 each act as for 3CLpro activity in the active site. The RdRp catalytic domain occupies 1478 to 1603; it reads AKVFAVDYSK…MFPIMYASIS (126 aa).

As to quaternary structure, homodimer. Interacts with NTPase, protein p30 and protease-polymerase p76. Interacts with capsid protein VP1 and protease-polymerase p76. Interacts with host IEF4e; this interaction plays a role in translation of viral proteins. In terms of assembly, homooligomer. Interacts with Vpg, protein p32 and may interact with capsid protein VP1. Specific enzymatic cleavages in vivo yield mature proteins. Pro-Pol is first autocatalytically cleaved, then processes the whole polyprotein. Post-translationally, VPg is uridylylated by the polymerase and is covalently attached to the 5'-end of the polyadenylated genomic and subgenomic RNAs. This uridylylated form acts as a nucleotide-peptide primer for the polymerase.

The protein localises to the host endoplasmic reticulum membrane. The enzyme catalyses a ribonucleoside 5'-triphosphate + H2O = a ribonucleoside 5'-diphosphate + phosphate + H(+). It catalyses the reaction RNA(n) + a ribonucleoside 5'-triphosphate = RNA(n+1) + diphosphate. The catalysed reaction is Endopeptidase with a preference for cleavage when the P1 position is occupied by Glu-|-Xaa and the P1' position is occupied by Gly-|-Yaa.. Together with NTPase and NS4, initiates the formation of the replication complex. Induces the proliferation of the host smooth ER membranes forming long tubular structures. These remodeled membranes probably form the viral factories that contain the replication complex. Functionally, displays NTPase activity, but no helicase activity. Induces the formation of convoluted membranes derived from the host ER. These remodeled membranes probably form the viral factories that contain the replication complex. Together with NS2 and NS4, initiates the formation of the replication complex. Its function is as follows. Probable key protein responsible for the formation of membrane alterations by the virus. Induces the formation of convoluted membranes derived from the host ER. These remodeled membranes probably form the viral factories that contain the replication complex. Together with NS2 and NTPase, initiates the formation of the replication complex. In terms of biological role, viral genome-linked protein is covalently linked to the 5'-end of the positive-strand, negative-strand genomic RNAs and subgenomic RNA. Acts as a genome-linked replication primer. May recruit ribosome to viral RNA thereby promoting viral proteins translation. Interacts with host translation initiation complex to allow the translation of viral proteins. Protease-polymerase p76 processes the polyprotein: Pro-Pol is first released by autocleavage, then all other proteins are cleaved. Cleaves host translation initiation factor eIF4G1, eIF4G2 and PABP1 thereby inducing a shutdown of host protein synthesis. This shutdown may not prevent viral mRNA from being translated since viral Vpg replaces the cap. It is also an RNA-directed RNA polymerase which replicates genomic and antigenomic viral RNA by recognizing specific signals. Also transcribes a subgenomic mRNA by initiating RNA synthesis internally on antigenomic RNA. This sgRNA codes for structural proteins. Catalyzes the covalent attachment VPg with viral RNAs. Cleaves host G3BP1 thereby preventing the assembly of host stress granules. This is Genome polyprotein from Felidae (cat family).